The chain runs to 616 residues: Polypeptide N-acetylgalactosaminyltransferase 3 (616 aa).

A helical; Signal-anchor for type II membrane protein membrane pass occupies residues 13-33 (FFHWKLWKFSIIVFVFLVFLF). The segment at 182–291 (LPTTSIIIVF…YGWLEPLLAR (110 aa)) is catalytic subdomain A. Positions 275, 277, and 413 each coordinate Mn(2+). The interval 354-416 (PIRTPTFAGG…PCSVVGHVFR (63 aa)) is catalytic subdomain B. Residue asparagine 482 is glycosylated (N-linked (GlcNAc...) asparagine). Positions 512–616 (NRMCLDVGEN…FQKWIFGQND (105 aa)) constitute a Ricin B-type lectin domain. A disulfide bridge connects residues cysteine 515 and cysteine 533. UDP-N-acetyl-alpha-D-galactosamine contacts are provided by aspartate 517, glutamate 520, histidine 534, and asparagine 539. A disulfide bond links cysteine 588 and cysteine 601.

The protein belongs to the glycosyltransferase 2 family. GalNAc-T subfamily. The cofactor is Mn(2+).

The protein resides in the golgi apparatus. It localises to the golgi stack membrane. The catalysed reaction is L-seryl-[protein] + UDP-N-acetyl-alpha-D-galactosamine = a 3-O-[N-acetyl-alpha-D-galactosaminyl]-L-seryl-[protein] + UDP + H(+). It carries out the reaction L-threonyl-[protein] + UDP-N-acetyl-alpha-D-galactosamine = a 3-O-[N-acetyl-alpha-D-galactosaminyl]-L-threonyl-[protein] + UDP + H(+). Its pathway is protein modification; protein glycosylation. In terms of biological role, catalyzes the initial reaction in O-linked oligosaccharide biosynthesis, the transfer of an N-acetyl-D-galactosamine residue to a serine or threonine residue on the protein receptor. Glycosylates FGF23. This chain is Polypeptide N-acetylgalactosaminyltransferase 3 (GALNT3), found in Taeniopygia guttata (Zebra finch).